A 165-amino-acid chain; its full sequence is NADPH-dependent 7-cyano-7-deazaguanine reductase (165 aa).

Cys-56 acts as the Thioimide intermediate in catalysis. Residue Asp-63 is the Proton donor of the active site. Residues 78–80 (VES) and 97–98 (HE) each bind substrate.

It belongs to the GTP cyclohydrolase I family. QueF type 1 subfamily.

The protein resides in the cytoplasm. It carries out the reaction 7-aminomethyl-7-carbaguanine + 2 NADP(+) = 7-cyano-7-deazaguanine + 2 NADPH + 3 H(+). It participates in tRNA modification; tRNA-queuosine biosynthesis. Catalyzes the NADPH-dependent reduction of 7-cyano-7-deazaguanine (preQ0) to 7-aminomethyl-7-deazaguanine (preQ1). This chain is NADPH-dependent 7-cyano-7-deazaguanine reductase, found in Geobacillus thermodenitrificans (strain NG80-2).